A 555-amino-acid chain; its full sequence is GPI-anchor transamidase component PIGS (555 aa).

The Cytoplasmic portion of the chain corresponds to 2–18; sequence AAAGAAATDLEVVRGKR. A cardiolipin is bound by residues R15 and R18. The helical transmembrane segment at 19-39 threads the bilayer; the sequence is SALFFAAVAILLGLPLWWKTT. Over 40–517 the chain is Lumenal; that stretch reads ETYRAPLPYS…LHLLYFPDDQ (478 aa). 2 N-linked (GlcNAc...) asparagine glycosylation sites follow: N267 and N370. The helical transmembrane segment at 518 to 532 threads the bilayer; that stretch reads KFAIYIPLFLPMAVP. The Cytoplasmic portion of the chain corresponds to 533–555; it reads ILLSLVKIFQETRKSWKKPEKID.

It belongs to the PIGS family. As to quaternary structure, heteropentamer. Part of the GPI-anchor transamidase complex, consisting of PIGK, PIGT, PIGS, PIGU and GAA1.

The protein resides in the endoplasmic reticulum membrane. It functions in the pathway glycolipid biosynthesis; glycosylphosphatidylinositol-anchor biosynthesis. In terms of biological role, component of the glycosylphosphatidylinositol-anchor (GPI-anchor) transamidase (GPI-T) complex that catalyzes the formation of the linkage between a proprotein and a GPI-anchor and participates in GPI anchored protein biosynthesis. The sequence is that of GPI-anchor transamidase component PIGS from Mus musculus (Mouse).